The following is a 417-amino-acid chain: F-box protein At3g07870 (417 aa).

Residues 22–68 (GGGLESLPEDIIADIFSRLPISSIARLMFVCRSWRSVLTQHGRLSSS) form the F-box domain.

This is F-box protein At3g07870 from Arabidopsis thaliana (Mouse-ear cress).